Reading from the N-terminus, the 926-residue chain is Probable zinc protease PqqL (926 aa).

Residue His79 participates in Zn(2+) binding. Glu82 acts as the Proton acceptor in catalysis. Zn(2+) is bound by residues His83 and Glu159.

The protein belongs to the peptidase M16 family. Zn(2+) serves as cofactor.

This Haemophilus influenzae (strain ATCC 51907 / DSM 11121 / KW20 / Rd) protein is Probable zinc protease PqqL (pqqL).